The primary structure comprises 292 residues: Transcription antiterminator LacT (292 aa).

PRD domains follow at residues 66–170 and 172–284; these read NIPI…DDGE and VFGK…APAQ.

It belongs to the transcriptional antiterminator BglG family.

Mediates positive regulation of the lac operon by functioning as an antiterminator factor of transcription. In Lacticaseibacillus casei (Lactobacillus casei), this protein is Transcription antiterminator LacT (lacT).